Reading from the N-terminus, the 377-residue chain is Bacterial actin-related protein (377 aa).

This sequence belongs to the actin family.

In terms of biological role, may be a dominant-negative inhibitor of eukaryotic actin polymerization. The sequence is that of Bacterial actin-related protein (barP) from Haliangium ochraceum (strain DSM 14365 / JCM 11303 / SMP-2).